Reading from the N-terminus, the 679-residue chain is E3 ubiquitin ligase RNF157 (679 aa).

Gly-2 is lipidated: N-myristoyl glycine. Residues 277-316 (CVVCLSDVRDTLILPCRHLCLCNTCADTLRYQANNCPICR) form an RING-type zinc finger. Positions 329 to 332 (RKKL) match the D-box 1 motif. 2 stretches are compositionally biased toward polar residues: residues 339–349 (SFNPIISSQTS) and 478–537 (ESEN…SMSG). Disordered regions lie at residues 339–362 (SFNP…NIPP), 416–604 (LDRL…TQEG), and 650–679 (VSRN…PLAV). Residues 585–598 (QDAEGNDVIEEEDG) are compositionally biased toward acidic residues. Residues 656 to 659 (RRRL) carry the D-box 2 motif. Residues Ser-660, Ser-661, Ser-662, and Ser-663 each carry the phosphoserine modification.

Interacts with APBB1. Interacts with CHD1; CHD1-binding controls RNF157 stability. Interacts with ATRN, MEGF8, TECR, MSI2, PLRG1, BYSL, MTERF3, PSMA1, MRPS18B, PRPF4, FASTKD2, SLC25A1, SMU1, CNOT9, MRPS2, MAGT1, FXR2, EMD, PSMD8, HDAC1, RAN, HSD17B12, TXNDC5 and MRPL19. Phosphorylation at Ser-660, Ser-661, Ser-662 and Ser-663 downstream of the PI3K and MAPK pathways influences the E3 ligase activity and stability of RNF157 during the cell cycle in an anaphase-promoting complex/cyclosome-CDH1-dependent manner.

The protein localises to the cytoplasm. It carries out the reaction S-ubiquitinyl-[E2 ubiquitin-conjugating enzyme]-L-cysteine + [acceptor protein]-L-lysine = [E2 ubiquitin-conjugating enzyme]-L-cysteine + N(6)-ubiquitinyl-[acceptor protein]-L-lysine.. In terms of biological role, E3 ubiquitin ligase that ubiquitinates APBB1 for its degradation by the proteasome and thus prevents apoptosis and promotes survival of neurons. Has a dual role in neurons as it is also required for dendrite growth and maintenance for which its ligase activity is not critical. May act as a scaffold molecule to regulate this process. Acts as a downstream effector of the interconnected PI3K and MAPK signaling pathways and thus participates in the regulation of the cell cycle. The sequence is that of E3 ubiquitin ligase RNF157 (RNF157) from Homo sapiens (Human).